The chain runs to 336 residues: MELPPNPGLVDVQRDALYAYDSEAHKAVVNSRPWTNDHKYFKTVRISSVAMIKMVMHARSGGNLEVMGMMQGYIEGSTMVITDAYRLPVEGTETRVNAQDEANEYMVEYLRLCREENRLENVIGWYHSHPGYGCWLSGIDVGTQSLQQQFNEPFVAVVIDPDRTVSQNKVEIGAFRTIPEGIKPFAATNTTTGDGQSVPLNKVEDFGAHSHRYYALDVEHFKSTLDSKLLETLWNKYWVQTLAQNPLLTNRDYTSSQMVDLGSRISKASKSLEMLSTTGQRGPKSDAVDQNIEKLLSEVKQIAAKERSGLMAAEVKGKVFGCGCRGQAEGVQPEKS.

The region spanning 44–181 (VRISSVAMIK…IGAFRTIPEG (138 aa)) is the MPN domain. Residues His-127, His-129, and Asp-140 each contribute to the Zn(2+) site. Positions 127-140 (HSHPGYGCWLSGID) match the JAMM motif motif.

Belongs to the peptidase M67A family. CSN5 subfamily. Component of the COP9 signalosome (CSN) complex.

Its subcellular location is the cytoplasm. The protein localises to the nucleus. Functionally, catalytic component of the COP9 signalosome (CSN) complex that acts as an regulator of the ubiquitin (Ubl) conjugation pathway by mediating the deneddylation of the cullin subunit of SCF-type E3 ubiquitin-protein ligase complexes. The CSN complex is involved in the regulation of the circadian clock through its control of the stability of the SCF(FWD-1) complex. This Neurospora crassa (strain ATCC 24698 / 74-OR23-1A / CBS 708.71 / DSM 1257 / FGSC 987) protein is COP9 signalosome complex subunit 5 (csn-5).